Here is a 120-residue protein sequence, read N- to C-terminus: Chaperonin GroEL (120 aa).

23–27 (DGTTT) is an ATP binding site.

Belongs to the chaperonin (HSP60) family. Forms a cylinder of 14 subunits composed of two heptameric rings stacked back-to-back. Interacts with the co-chaperonin GroES.

It localises to the cytoplasm. It catalyses the reaction ATP + H2O + a folded polypeptide = ADP + phosphate + an unfolded polypeptide.. Its function is as follows. Together with its co-chaperonin GroES, plays an essential role in assisting protein folding. The GroEL-GroES system forms a nano-cage that allows encapsulation of the non-native substrate proteins and provides a physical environment optimized to promote and accelerate protein folding. In Mycobacterium kansasii, this protein is Chaperonin GroEL.